The chain runs to 475 residues: MSDFDEFERQLNENKQERDKENRHRKRSHSRSRSRDRKRRSRSRDRRNRDQRSASRDRRRRSKPLTRGAKEEHGGLIRSPRHEKKKKVRKYWDVPPPGFEHITPMQYKAMQAAGQIPATALLPTMTPDGLAVTPTPVPVVGSQMTRQARRLYVGNIPFGITEEAMMDFFNAQMRLGGLTQAPGNPVLAVQINQDKNFAFLEFRSVDETTQAMAFDGIIFQGQSLKIRRPHDYQPLPGMSENPSVYVPGVVSTVVPDSAHKLFIGGLPNYLNDDQVKELLTSFGPLKAFNLVKDSATGLSKGYAFCEYVDINVTDQAIAGLNGMQLGDKKLLVQRASVGAKNATLVSLPSTINQTPVTLQVPGLMSSQVQMGGHPTEVLCLMNMVLPEELLDDEEYEEIVEDVRDECSKYGLVKSIEIPRPVDGVEVPGCGKIFVEFTSVFDCQKAMQGLTGRKFANRVVVTKYCDPDSYHRRDFW.

A disordered region spans residues 1-90 (MSDFDEFERQ…RHEKKKKVRK (90 aa)). Residue S2 is modified to N-acetylserine. S2 is subject to Phosphoserine. Positions 2 to 93 (SDFDEFERQL…KKKKVRKYWD (92 aa)) are required for interaction with PRPF19. The segment covering 7-22 (FERQLNENKQERDKEN) has biased composition (basic and acidic residues). K15 carries the post-translational modification 5-hydroxylysine; by JMJD6; alternate. K15 participates in a covalent cross-link: Glycyl lysine isopeptide (Lys-Gly) (interchain with G-Cter in SUMO2); alternate. The interval 17-47 (ERDKENRHRKRSHSRSRSRDRKRRSRSRDRR) is necessary and sufficient to stimulate pre-mRNAs 3'-end cleavage in a CFIm complex-dependent manner. The span at 23-46 (RHRKRSHSRSRSRDRKRRSRSRDR) shows a compositional bias: basic residues. The segment covering 47-56 (RNRDQRSASR) has biased composition (basic and acidic residues). A Glycyl lysine isopeptide (Lys-Gly) (interchain with G-Cter in SUMO2); alternate cross-link involves residue K70. K70 carries the post-translational modification N6-acetyllysine; alternate. S79 is modified (phosphoserine). The segment covering 79-89 (SPRHEKKKKVR) has biased composition (basic residues). RRM domains follow at residues 149–231 (RRLY…RPHD), 259–337 (HKLF…RASV), and 385–466 (LPEE…YCDP). A 5-hydroxylysine; by JMJD6 modification is found at K276. Position 294 is a phosphoserine (S294).

This sequence belongs to the splicing factor SR family. Interacts with U2AF1L4. Heterodimer with U2AF1. Binds unphosphorylated SF1. Interacts with SCAF11 and SNW1. Interacts with ZRSR2/U2AF1-RS2. Interacts with RBM17. Interacts with PRPF19; the interaction is direct. Interacts with POLR2A (via the C-terminal domain); Interacts with PRPF19; the interaction is direct. Interacts with POLR2A (via the C-terminal domain); recruits PRPF19 and the Prp19 complex to the pre-mRNA. Interacts with KHDC4 (Isoform 2). Interacts with ZRSR2. Interacts with the SF3B complex composed of SF3B1, SF3B2, SF3B3, SF3B4, SF3B5, SF3B6 and PHF5A. Interacts (via N-terminus) with CPSF7 (via C-terminus); this interaction stimulates pre-mRNA 3'-end processing by promoting the recruitment of the CFIm complex to cleavage and polyadenylation signals. Interacts with ARGLU1; interaction may be involved in ARGLU1-mediated modulation of alternative splicing. Post-translationally, lysyl-hydroxylation at Lys-15 and Lys-276 affects the mRNA splicing activity of the protein, leading to regulate some, but not all, alternative splicing events.

Its subcellular location is the nucleus. Its function is as follows. Plays a role in pre-mRNA splicing and 3'-end processing. By recruiting PRPF19 and the PRP19C/Prp19 complex/NTC/Nineteen complex to the RNA polymerase II C-terminal domain (CTD), and thereby pre-mRNA, may couple transcription to splicing. Required for the export of mRNA out of the nucleus, even if the mRNA is encoded by an intron-less gene. Positively regulates pre-mRNA 3'-end processing by recruiting the CFIm complex to cleavage and polyadenylation signals. This chain is Splicing factor U2AF 65 kDa subunit (U2af2), found in Mus musculus (Mouse).